The chain runs to 287 residues: Glutamate racemase (287 aa).

The segment covering 1–15 has biased composition (polar residues); that stretch reads MATKPQDANTTSREA. Positions 1–25 are disordered; that stretch reads MATKPQDANTTSREAITSKADSPPR. Residues 32 to 33 and 64 to 65 each bind substrate; these read DS and YG. The active-site Proton donor/acceptor is Cys96. 97-98 is a substrate binding site; the sequence is NT. The Proton donor/acceptor role is filled by Cys208. Substrate is bound at residue 209-210; that stretch reads TH.

This sequence belongs to the aspartate/glutamate racemases family.

The catalysed reaction is L-glutamate = D-glutamate. It functions in the pathway cell wall biogenesis; peptidoglycan biosynthesis. Provides the (R)-glutamate required for cell wall biosynthesis. The protein is Glutamate racemase of Yersinia pseudotuberculosis serotype IB (strain PB1/+).